The following is a 239-amino-acid chain: Exosome complex component Rrp4 (239 aa).

The 73-residue stretch at 67–139 (GDFVVGIVEE…PVQRVELSLL (73 aa)) folds into the S1 motif domain. One can recognise a KH domain in the interval 151-217 (QGGQVVEIDP…LAVRAIREIE (67 aa)).

Belongs to the RRP4 family. Component of the archaeal exosome complex. Forms a trimer of Rrp4 and/or Csl4 subunits. The trimer associates with a hexameric ring-like arrangement composed of 3 Rrp41-Rrp42 heterodimers.

It localises to the cytoplasm. Functionally, non-catalytic component of the exosome, which is a complex involved in RNA degradation. Increases the RNA binding and the efficiency of RNA degradation. Confers strong poly(A) specificity to the exosome. The chain is Exosome complex component Rrp4 from Methanopyrus kandleri (strain AV19 / DSM 6324 / JCM 9639 / NBRC 100938).